We begin with the raw amino-acid sequence, 331 residues long: Beta-ketoacyl-[acyl-carrier-protein] synthase III (331 aa).

Active-site residues include Cys-115 and His-255. Residues 256 to 260 (QANFR) form an ACP-binding region. Residue Asn-285 is part of the active site.

It belongs to the thiolase-like superfamily. FabH family. Homodimer.

It localises to the cytoplasm. It catalyses the reaction malonyl-[ACP] + acetyl-CoA + H(+) = 3-oxobutanoyl-[ACP] + CO2 + CoA. It functions in the pathway lipid metabolism; fatty acid biosynthesis. Its function is as follows. Catalyzes the condensation reaction of fatty acid synthesis by the addition to an acyl acceptor of two carbons from malonyl-ACP. Catalyzes the first condensation reaction which initiates fatty acid synthesis and may therefore play a role in governing the total rate of fatty acid production. Possesses both acetoacetyl-ACP synthase and acetyl transacylase activities. Its substrate specificity determines the biosynthesis of branched-chain and/or straight-chain of fatty acids. This is Beta-ketoacyl-[acyl-carrier-protein] synthase III from Helicobacter pylori (strain ATCC 700392 / 26695) (Campylobacter pylori).